A 168-amino-acid chain; its full sequence is Probable chemoreceptor glutamine deamidase CheD (168 aa).

This sequence belongs to the CheD family.

It catalyses the reaction L-glutaminyl-[protein] + H2O = L-glutamyl-[protein] + NH4(+). Probably deamidates glutamine residues to glutamate on methyl-accepting chemotaxis receptors (MCPs), playing an important role in chemotaxis. The polypeptide is Probable chemoreceptor glutamine deamidase CheD (Pseudomonas syringae pv. tomato (strain ATCC BAA-871 / DC3000)).